Here is a 369-residue protein sequence, read N- to C-terminus: 2-aminoethylphosphonate--pyruvate transaminase (369 aa).

Lysine 193 is subject to N6-(pyridoxal phosphate)lysine.

This sequence belongs to the class-V pyridoxal-phosphate-dependent aminotransferase family. PhnW subfamily. Homodimer. It depends on pyridoxal 5'-phosphate as a cofactor.

The enzyme catalyses (2-aminoethyl)phosphonate + pyruvate = phosphonoacetaldehyde + L-alanine. Functionally, involved in phosphonate degradation. This is 2-aminoethylphosphonate--pyruvate transaminase from Burkholderia pseudomallei (strain 668).